The sequence spans 107 residues: PAKGANVFWKCMACHAVGEGAKNKVGPELNGIIGRKMGSIEGFNYSDTLKEHNAKGDVWTAEILSQYLANPKGYMPGVKMVFAGLPKEIRADDLEAYLKTFNADGTK.

Residues C11, C14, H15, and M80 each coordinate heme c.

In terms of processing, binds 1 heme c group covalently per subunit.

In Ancylobacter novellus (Thiobacillus novellus), this protein is Cytochrome c-550.